The following is a 207-amino-acid chain: Dephospho-CoA kinase (207 aa).

One can recognise a DPCK domain in the interval 12–207 (LIGITGMIGG…LYSTLLGKML (196 aa)). An ATP-binding site is contributed by 20 to 25 (GGGKST).

It belongs to the CoaE family.

The protein localises to the cytoplasm. The catalysed reaction is 3'-dephospho-CoA + ATP = ADP + CoA + H(+). It participates in cofactor biosynthesis; coenzyme A biosynthesis; CoA from (R)-pantothenate: step 5/5. Catalyzes the phosphorylation of the 3'-hydroxyl group of dephosphocoenzyme A to form coenzyme A. The chain is Dephospho-CoA kinase from Leptospira interrogans serogroup Icterohaemorrhagiae serovar Lai (strain 56601).